A 199-amino-acid chain; its full sequence is Small ribosomal subunit protein eS1 (199 aa).

The protein belongs to the eukaryotic ribosomal protein eS1 family.

In Pyrococcus abyssi (strain GE5 / Orsay), this protein is Small ribosomal subunit protein eS1.